The sequence spans 135 residues: S-protein homolog 29 (135 aa).

Residues 1 to 24 form the signal peptide; that stretch reads MKNSSKIFVVLSIILFYVISSCHG. An N-linked (GlcNAc...) asparagine glycan is attached at Asn110.

It belongs to the plant self-incompatibility (S1) protein family.

The protein localises to the secreted. The protein is S-protein homolog 29 of Arabidopsis thaliana (Mouse-ear cress).